Here is a 148-residue protein sequence, read N- to C-terminus: Small ribosomal subunit protein uS7c (148 aa).

Belongs to the universal ribosomal protein uS7 family. As to quaternary structure, part of the 30S ribosomal subunit.

The protein localises to the plastid. It localises to the chloroplast. One of the primary rRNA binding proteins, it binds directly to 16S rRNA where it nucleates assembly of the head domain of the 30S subunit. The chain is Small ribosomal subunit protein uS7c (rps7) from Cyanidioschyzon merolae (strain NIES-3377 / 10D) (Unicellular red alga).